A 396-amino-acid chain; its full sequence is S-adenosylmethionine synthase (396 aa).

His-16 is a binding site for ATP. Asp-18 lines the Mg(2+) pocket. Glu-44 serves as a coordination point for K(+). Residues Glu-57 and Gln-100 each contribute to the L-methionine site. The segment at 100 to 110 (QSVDIAQGVDR) is flexible loop. ATP contacts are provided by residues 165 to 167 (DAK), Asp-240, 246 to 247 (RK), Ala-263, and Lys-267. Asp-240 contacts L-methionine. An L-methionine-binding site is contributed by Lys-271.

It belongs to the AdoMet synthase family. In terms of assembly, homotetramer; dimer of dimers. Mg(2+) is required as a cofactor. It depends on K(+) as a cofactor.

The protein resides in the cytoplasm. The enzyme catalyses L-methionine + ATP + H2O = S-adenosyl-L-methionine + phosphate + diphosphate. The protein operates within amino-acid biosynthesis; S-adenosyl-L-methionine biosynthesis; S-adenosyl-L-methionine from L-methionine: step 1/1. Catalyzes the formation of S-adenosylmethionine (AdoMet) from methionine and ATP. The overall synthetic reaction is composed of two sequential steps, AdoMet formation and the subsequent tripolyphosphate hydrolysis which occurs prior to release of AdoMet from the enzyme. The polypeptide is S-adenosylmethionine synthase (Stutzerimonas stutzeri (strain A1501) (Pseudomonas stutzeri)).